Here is a 77-residue protein sequence, read N- to C-terminus: Large ribosomal subunit protein uL24 (77 aa).

Positions 42–61 (KKHQKPSQTNANGGVVESEG) are disordered.

It belongs to the universal ribosomal protein uL24 family. As to quaternary structure, part of the 50S ribosomal subunit.

Functionally, one of two assembly initiator proteins, it binds directly to the 5'-end of the 23S rRNA, where it nucleates assembly of the 50S subunit. One of the proteins that surrounds the polypeptide exit tunnel on the outside of the subunit. In Lactobacillus acidophilus (strain ATCC 700396 / NCK56 / N2 / NCFM), this protein is Large ribosomal subunit protein uL24.